A 94-amino-acid polypeptide reads, in one-letter code: Protein translocase subunit SecE (94 aa).

The interval 1 to 32 is disordered; the sequence is MTDAVGSIDTPDAQDEVPESKKTRKGGKRAKK. A compositionally biased stretch (basic residues) spans 22-32; that stretch reads KTRKGGKRAKK. Residues 59 to 81 traverse the membrane as a helical segment; that stretch reads QLTSYTTVVIFFVAIMIRLVTVI.

The protein belongs to the SecE/SEC61-gamma family. In terms of assembly, component of the Sec protein translocase complex. Heterotrimer consisting of SecY, SecE and SecG subunits. The heterotrimers can form oligomers, although 1 heterotrimer is thought to be able to translocate proteins. Interacts with the ribosome. Interacts with SecDF, and other proteins may be involved. Interacts with SecA.

Its subcellular location is the cell membrane. Functionally, essential subunit of the Sec protein translocation channel SecYEG. Clamps together the 2 halves of SecY. May contact the channel plug during translocation. In Streptomyces galbus, this protein is Protein translocase subunit SecE.